The chain runs to 169 residues: MSTCGDNSKIFQDIQNFIQDYDLNKDYSVTSSEIYQSFLKKMNGDSLKASQAAGVLCSTVDMDNDGKFSYYEISKYCADQAKKQIEQNAETAALADVEALLLRLDKDKDKKLNKTEFVKFFKEQGYNPYSDPDYVLKIIDLDKDGYVSASELQEWFKQKRLAYARGPIC.

4 EF-hand domains span residues 9–44 (KIFQ…KMNG), 60–83 (VDMD…QAKK), 92–127 (AALA…QGYN), and 133–162 (DYVL…KRLA). Aspartate 105, aspartate 107, aspartate 109, lysine 111, glutamate 116, aspartate 140, aspartate 142, aspartate 144, tyrosine 146, and glutamate 151 together coordinate Ca(2+).

This Dictyostelium discoideum (Social amoeba) protein is Calcium-binding protein G (cbpG).